The following is a 576-amino-acid chain: Arginine--tRNA ligase (576 aa).

Positions 126 to 136 (ANPTGPMHIGH) match the 'HIGH' region motif.

It belongs to the class-I aminoacyl-tRNA synthetase family. As to quaternary structure, monomer.

The protein localises to the cytoplasm. It catalyses the reaction tRNA(Arg) + L-arginine + ATP = L-arginyl-tRNA(Arg) + AMP + diphosphate. The protein is Arginine--tRNA ligase (argS) of Rickettsia prowazekii (strain Madrid E).